The sequence spans 221 residues: Very-long-chain (3R)-3-hydroxyacyl-CoA dehydratase PASTICCINO 2A (221 aa).

Topologically, residues 1–11 (MAGVGSAVRRL) are cytoplasmic. A helical transmembrane segment spans residues 12–32 (YLSVYNWAVFFGWAQVLYYAV). Residues 33–51 (TTLLESGHEAVYAAVERPL) are Lumenal-facing. Residues 52 to 70 (QFAQTAAFLEILHGLVGLV) form a helical membrane-spanning segment. Residues 71–76 (RSPVSA) lie on the Cytoplasmic side of the membrane. A helical transmembrane segment spans residues 77 to 95 (TLPQIGSRLFLTWGILWSF). The Lumenal portion of the chain corresponds to 96–100 (PETHS). Residues 101–121 (HILVTSLVISWSITEIIRYSF) form a helical membrane-spanning segment. The Cytoplasmic segment spans residues 122 to 141 (FGMKEAFGFAPSWLLWLRYS). A helical membrane pass occupies residues 142–165 (TFMVLYPTGISSEVGLIYIALPYM). Catalysis depends on residues tyrosine 147 and glutamate 154. Topologically, residues 166 to 184 (KASEKYCLRMPNKWNFSFD) are lumenal. The chain crosses the membrane as a helical span at residues 185 to 209 (FFYASILSLAIYVPGSPHMFTYMLA). Residues 210 to 221 (QRKKALAKAKAA) are Cytoplasmic-facing.

Belongs to the very long-chain fatty acids dehydratase HACD family.

It localises to the endoplasmic reticulum membrane. It carries out the reaction a very-long-chain (3R)-3-hydroxyacyl-CoA = a very-long-chain (2E)-enoyl-CoA + H2O. It participates in lipid metabolism; fatty acid biosynthesis. In terms of biological role, catalyzes the third of the four reactions of the long-chain fatty acids elongation cycle. This endoplasmic reticulum-bound enzymatic process, allows the addition of two carbons to the chain of long- and very long-chain fatty acids/VLCFAs per cycle. This enzyme catalyzes the dehydration of the 3-hydroxyacyl-CoA intermediate into trans-2,3-enoyl-CoA, within each cycle of fatty acid elongation. Thereby, it participates in the production of VLCFAs of different chain lengths that are involved in multiple biological processes as precursors of membrane lipids and lipid mediators. May be an anti-phosphatase that prevents CDKA-1 dephosphorylation and activation. Involved in the hormonal control of cell division and differentiation. Required for proliferation control of meristematic and non-meristematic cells. Negative regulator of the cell cycle. The protein is Very-long-chain (3R)-3-hydroxyacyl-CoA dehydratase PASTICCINO 2A (PAS2A) of Oryza sativa subsp. japonica (Rice).